The following is a 119-amino-acid chain: Ribonuclease P protein component (119 aa).

It belongs to the RnpA family. Consists of a catalytic RNA component (M1 or rnpB) and a protein subunit.

It catalyses the reaction Endonucleolytic cleavage of RNA, removing 5'-extranucleotides from tRNA precursor.. Its function is as follows. RNaseP catalyzes the removal of the 5'-leader sequence from pre-tRNA to produce the mature 5'-terminus. It can also cleave other RNA substrates such as 4.5S RNA. The protein component plays an auxiliary but essential role in vivo by binding to the 5'-leader sequence and broadening the substrate specificity of the ribozyme. In Coprothermobacter proteolyticus (strain ATCC 35245 / DSM 5265 / OCM 4 / BT), this protein is Ribonuclease P protein component.